The chain runs to 377 residues: Actin depolymerising venom protein gelsolin 1 (377 aa).

The N-terminal stretch at Met1–Gly26 is a signal peptide. Gelsolin-like repeat units follow at residues Phe50–Phe133, Ile174–Ser243, and Glu298–Phe368.

As to expression, expressed by the venom gland (posterior main gland) (at protein level).

The protein resides in the secreted. The chain is Actin depolymerising venom protein gelsolin 1 from Platymeris rhadamanthus (Red spot assassin bug).